A 142-amino-acid polypeptide reads, in one-letter code: Potassium voltage-gated channel subfamily E regulatory beta subunit 5 (142 aa).

N-linked (GlcNAc...) asparagine glycosylation is found at Asn-2 and Asn-25. A helical transmembrane segment spans residues 61–81; the sequence is LYILLIMIFYACLAGGLILAY. Over 82 to 142 the chain is Cytoplasmic; sequence TRSRKLVEAK…PALAQGAERV (61 aa). A disordered region spans residues 119-142; it reads SQAEGRRQLASEGLPALAQGAERV.

It belongs to the potassium channel KCNE family. In terms of assembly, interacts with KCNQ1; impairs KCNQ1 localization in lipid rafts and only conducts current upon strong and continued depolarization. Highly expressed in heart, skeletal muscle, brain, spinal cord and placenta.

It localises to the membrane. Its function is as follows. Potassium channel ancillary subunit that is essential for generation of some native K(+) currents by virtue of formation of heteromeric ion channel complex with voltage-gated potassium (Kv) channel pore-forming alpha subunits. Functions as an inhibitory beta-subunit of the repolarizing cardiac potassium ion channel KCNQ1. The protein is Potassium voltage-gated channel subfamily E regulatory beta subunit 5 (KCNE5) of Homo sapiens (Human).